The sequence spans 344 residues: MKDLGAKHLAGGEGVQLFGLLNFYLEQEQRYQPREKGLILMEATPENDNTLCSRLRNAKVEDLRSLTNFFGSGTETFVLAVNILDRFLALMKVKPKHLSCIGVCCFLLAARLAEEEGDVPPTHDVIRISQCKCTASDIKRMEKIISEKLHYELEATTALNFLHLYHAIVFCHTSERKEILSLDKLEAQLKACNCRVVFSKARPSVLALCLLNLEIETIKSVELLEILLLVKKHLKLSDTEFFYWRELVSKCLAEYSSPRCCKPDLKKLVWIVSRRTAQNLHSSYYSVPELPTIPEGGCFDGSESEDSGEDMSCGEESLSSSPPSDQECTFFFDFQVAQTLCFPP.

The segment at 298–324 (CFDGSESEDSGEDMSCGEESLSSSPPS) is disordered. Over residues 302–313 (SESEDSGEDMSC) the composition is skewed to acidic residues.

This sequence belongs to the cyclin family. Cyclin G subfamily. Highest levels in intestine. Intermediate levels in spleen, brain and kidney. Low levels in testis, stomach, pancreas, liver, salivary gland and muscle. According to PubMed:9139721 also abundant in thymus.

It is found in the cytoplasm. It localises to the nucleus. Its function is as follows. May play a role in growth regulation and in negative regulation of cell cycle progression. The chain is Cyclin-G2 (Ccng2) from Mus musculus (Mouse).